A 164-amino-acid chain; its full sequence is Thiol peroxidase (164 aa).

One can recognise a Thioredoxin domain in the interval 17–162 (IKVGDTFPDF…YDEVLQAAQA (146 aa)). The Cysteine sulfenic acid (-SOH) intermediate role is filled by Cys-58. A disulfide bridge links Cys-58 with Cys-92.

This sequence belongs to the peroxiredoxin family. Tpx subfamily. Homodimer.

It catalyses the reaction a hydroperoxide + [thioredoxin]-dithiol = an alcohol + [thioredoxin]-disulfide + H2O. Thiol-specific peroxidase that catalyzes the reduction of hydrogen peroxide and organic hydroperoxides to water and alcohols, respectively. Plays a role in cell protection against oxidative stress by detoxifying peroxides. The protein is Thiol peroxidase of Clostridium acetobutylicum (strain ATCC 824 / DSM 792 / JCM 1419 / IAM 19013 / LMG 5710 / NBRC 13948 / NRRL B-527 / VKM B-1787 / 2291 / W).